The primary structure comprises 248 residues: Thioesterase FSL2 (248 aa).

Catalysis depends on charge relay system residues S125, D195, and H223.

The protein belongs to the LovG family.

It participates in secondary metabolite biosynthesis. Functionally, thioesterase; part of the gene cluster that mediates the biosynthesis of fusarielins F, G and H, decaketide compounds with 5 methylations and a decaline core that act as mycoestrogens as they stimulate growth of MCF-7 breast cancer cells. The initial compound in the pathway is produced by the reducing polyketide synthase FSL1. FSL1 lacks an active enoyl reductase (ER) domain and biosynthesis of fusarielins relies on the trans-acting enoyl reductase FSL5, before it is released through hydrolysis catalyzed by the thioesterase FSL2. Fusarielins F, G, and H have a C11=C12 cis double bond and is fully reduced between C10 and C11 and between C12 and C13. FSL3 can be involved in the formation of the C11=C12 cis double bond by moving a hypothetical C10=C11 or C12=C13 trans double bond to form prefusarielin. Prefusarielin is oxygenated at C15 and C16 by the cytochrome P450 monooxygenase FSL4, resulting in fusarielin F, which subsequently is epoxidized into fusarielin G by the same enzyme. The final step in the pathway is a reduction of the carboxylic acid moiety to yield fusarielin H via a still undetermined mechanism. This is Thioesterase FSL2 from Gibberella zeae (strain ATCC MYA-4620 / CBS 123657 / FGSC 9075 / NRRL 31084 / PH-1) (Wheat head blight fungus).